The chain runs to 308 residues: Porphobilinogen deaminase (308 aa).

C240 carries the S-(dipyrrolylmethanemethyl)cysteine modification.

This sequence belongs to the HMBS family. In terms of assembly, monomer. Dipyrromethane is required as a cofactor.

The enzyme catalyses 4 porphobilinogen + H2O = hydroxymethylbilane + 4 NH4(+). Its pathway is porphyrin-containing compound metabolism; protoporphyrin-IX biosynthesis; coproporphyrinogen-III from 5-aminolevulinate: step 2/4. Its function is as follows. Tetrapolymerization of the monopyrrole PBG into the hydroxymethylbilane pre-uroporphyrinogen in several discrete steps. In Laribacter hongkongensis (strain HLHK9), this protein is Porphobilinogen deaminase.